Consider the following 161-residue polypeptide: Small ribosomal subunit protein uS9 (161 aa).

The segment covering methionine 1 to glutamate 21 has biased composition (polar residues). The interval methionine 1 to proline 25 is disordered.

Belongs to the universal ribosomal protein uS9 family.

The sequence is that of Small ribosomal subunit protein uS9 from Methylorubrum populi (strain ATCC BAA-705 / NCIMB 13946 / BJ001) (Methylobacterium populi).